A 180-amino-acid polypeptide reads, in one-letter code: uncharacterized protein (180 aa).

Positions 45 to 180 constitute an N-acetyltransferase domain; it reads FVFSQVRTLD…GNRCAFWYAN (136 aa).

Belongs to the acetyltransferase family. Ycf52 subfamily.

This is an uncharacterized protein from Prochlorococcus marinus (strain SARG / CCMP1375 / SS120).